Here is a 126-residue protein sequence, read N- to C-terminus: MSGMGFVAVGVGAALGAWLRWAFAVLWNAINPALPYGTLAANLLGGYLIGVAVGFFDTHASLPPEWRLLAVTGFLGGLTTFSTFSSEVMANILAGDYAIGMLHVAAHLGGSLFLTMLGLWTVRTLG.

Transmembrane regions (helical) follow at residues 6–26, 36–56, 68–88, and 99–119; these read FVAV…FAVL, YGTL…VGFF, LLAV…SSEV, and IGML…MLGL. Gly-76 and Thr-79 together coordinate Na(+).

It belongs to the fluoride channel Fluc/FEX (TC 1.A.43) family.

The protein resides in the cell inner membrane. The enzyme catalyses fluoride(in) = fluoride(out). With respect to regulation, na(+) is not transported, but it plays an essential structural role and its presence is essential for fluoride channel function. Fluoride-specific ion channel. Important for reducing fluoride concentration in the cell, thus reducing its toxicity. This Ralstonia nicotianae (strain ATCC BAA-1114 / GMI1000) (Ralstonia solanacearum) protein is Fluoride-specific ion channel FluC.